The sequence spans 49 residues: Large ribosomal subunit protein bL32 (49 aa).

The tract at residues Ala-25–Lys-49 is disordered.

The protein belongs to the bacterial ribosomal protein bL32 family.

This is Large ribosomal subunit protein bL32 from Sulfurimonas denitrificans (strain ATCC 33889 / DSM 1251) (Thiomicrospira denitrificans (strain ATCC 33889 / DSM 1251)).